A 61-amino-acid polypeptide reads, in one-letter code: Large ribosomal subunit protein eL24 (61 aa).

Zn(2+) is bound by residues C7, C10, C33, and C37. Residues 7 to 37 (CSFCGGDIPPATGMMHVRNDGTILWFCSNKC) form a C4-type zinc finger.

This sequence belongs to the eukaryotic ribosomal protein eL24 family. Part of the 50S ribosomal subunit. Forms a cluster with proteins L3 and L14. The cofactor is Zn(2+).

In terms of biological role, binds to the 23S rRNA. This is Large ribosomal subunit protein eL24 from Metallosphaera sedula (strain ATCC 51363 / DSM 5348 / JCM 9185 / NBRC 15509 / TH2).